The following is a 557-amino-acid chain: Formate--tetrahydrofolate ligase 1 (557 aa).

Thr-66 to Thr-73 contributes to the ATP binding site.

This sequence belongs to the formate--tetrahydrofolate ligase family.

The enzyme catalyses (6S)-5,6,7,8-tetrahydrofolate + formate + ATP = (6R)-10-formyltetrahydrofolate + ADP + phosphate. It participates in one-carbon metabolism; tetrahydrofolate interconversion. This is Formate--tetrahydrofolate ligase 1 from Streptococcus sanguinis (strain SK36).